A 1456-amino-acid polypeptide reads, in one-letter code: DNA polymerase gamma, mitochondrial (1456 aa).

A mitochondrion-targeting transit peptide spans 1–41 (MLTPVRCRTVPNATVATAARVLRRANLFSRYPRQLGHLRWD). Disordered regions lie at residues 1200–1266 (APEM…SLDD) and 1308–1443 (AVTT…SWKP). Low complexity predominate over residues 1204-1239 (AAVPSTSSESKSKASATTSTTTTENATASPSSSSNV). The span at 1315 to 1325 (PEPPTNPPPVA) shows a compositional bias: pro residues. Composition is skewed to low complexity over residues 1346–1371 (PKNP…TPKP) and 1411–1428 (TASV…ATAT).

It belongs to the DNA polymerase type-A family. Requires Mg(2+) as cofactor.

Its subcellular location is the mitochondrion. The enzyme catalyses DNA(n) + a 2'-deoxyribonucleoside 5'-triphosphate = DNA(n+1) + diphosphate. Involved in the replication of mitochondrial DNA. This chain is DNA polymerase gamma, mitochondrial (mip-1), found in Neurospora crassa (strain ATCC 24698 / 74-OR23-1A / CBS 708.71 / DSM 1257 / FGSC 987).